Reading from the N-terminus, the 184-residue chain is Ribosome-recycling factor (184 aa).

This sequence belongs to the RRF family.

Its subcellular location is the cytoplasm. Responsible for the release of ribosomes from messenger RNA at the termination of protein biosynthesis. May increase the efficiency of translation by recycling ribosomes from one round of translation to another. This is Ribosome-recycling factor from Leptospira interrogans serogroup Icterohaemorrhagiae serovar copenhageni (strain Fiocruz L1-130).